A 725-amino-acid chain; its full sequence is MFDVQREELLWGGRKLVLETGKVARQADGAVVASYGETTVLATVVSLKEPKPGIDFLPLTVNYQERAYAAGRIPGGYFKREGRPSEKETLVSRLIDRPIRPLFVEGWRNDTQVVVTVLSHDLENDPDIVSMVAASAALTLSGVPFMGPIGAARVGYVGNQYKLNPTIQEMEGSSLDLVVAGTEAAVLMVESEAKELPEDVMLGAVMFGHKHFQPVIEAIIRLAEKAAKEPRDFQPTDLSEVEKAVLEIGEADLREAYKKTVKQERYAAVDAVKAKVMAALAPEEGEAKFEPETVKAAFKEVQAKVVRWNILDTGSRIDGRDVRTVRPILSEVGVLPRAHGSALFTRGETQALVVATLGTGDDEQFIDALEGTYKETFLLHYNFPPYSVGETGRMGSPGRREIGHGKLAWRAVHPLLPAAHEFPYTIRVVSEITESNGSSSMATVCGSSLALMDAGVPLRRPVAGIAMGLILEGERFAVLSDILGDEDHLGDMDFKVAGTSEGVTSLQMDIKIAGITEEIMRVALDQAKDGRAHILGEMAKALTAARPELGEHAPRIETMQIPTDKIREVIGTGGKVIREIVEKTGAKIDIQDTGVIKIASSDAKAIKAAYNWIRSIVAEPEAGMIYDGTVVKTMEFGAFINFFGAKDGLVHISELAPQRVAKVTDVVKEGDKVKVKFLGQDERGKIRLSMKVVDQQTGEDITEKLKAEREADRNRERQARQSAGE.

The Mg(2+) site is built by Asp487 and Asp493. In terms of domain architecture, KH spans Pro554 to Ile613. The S1 motif domain occupies Gly623–Lys691. A disordered region spans residues Thr697–Glu725. The segment covering Ile701–Ala719 has biased composition (basic and acidic residues).

The protein belongs to the polyribonucleotide nucleotidyltransferase family. Mg(2+) is required as a cofactor.

The protein resides in the cytoplasm. The enzyme catalyses RNA(n+1) + phosphate = RNA(n) + a ribonucleoside 5'-diphosphate. Functionally, involved in mRNA degradation. Catalyzes the phosphorolysis of single-stranded polyribonucleotides processively in the 3'- to 5'-direction. The chain is Polyribonucleotide nucleotidyltransferase from Methylobacterium nodulans (strain LMG 21967 / CNCM I-2342 / ORS 2060).